The chain runs to 512 residues: MAKNVAIFGLLFSLLLLVPSQIFAEESSTDAKEFVLTLDNTNFHDTVKKHDFIVVEFYAPWCGHCKKLAPEYEKAASILSTHEPPVVLAKVDANEEHNKDLASENDVKGFPTIKIFRNGGKNIQEYKGPREAEGIVEYLKKQSGPASTEIKSADDATAFVGDNKVVIVGVFPKFSGEEYDNFIALAEKLRSDYDFAHTLNAKHLPKGDSSVSGPVVRLFKPFDELFVDSKDFNVEALEKFIEESSTPIVTVFNNEPSNHPFVVKFFNSPNAKAMLFINFTTEGAESFKTKYHEVAEQYKQQGVSFLVGDVESSQGAFQYFGLKEEQVPLIIIQHNDGKKFFKPNLELDQLPTWLKAYKDGKVEPFVKSEPIPETNNEPVKVVVGQTLEDVVFKSGKNVLIEFYAPWCGHCKQLAPILDEVAVSFQSDADVVIAKLDATANDIPTDTFDVQGYPTLYFRSASGKLSQYDGGRTKEDIIEFIEKNKDKTGAAHQEVEQPKAAAQPEAEQPKDEL.

A signal peptide spans 1-24 (MAKNVAIFGLLFSLLLLVPSQIFA). The Thioredoxin 1 domain maps to 25-144 (EESSTDAKEF…IVEYLKKQSG (120 aa)). Residues Cys-62 and Cys-65 each act as nucleophile in the active site. A disulfide bridge links Cys-62 with Cys-65. Residue Asn-278 is glycosylated (N-linked (GlcNAc...) asparagine). The Thioredoxin 2 domain occupies 357 to 485 (YKDGKVEPFV…IIEFIEKNKD (129 aa)). Catalysis depends on nucleophile residues Cys-407 and Cys-410. Cysteines 407 and 410 form a disulfide. Over residues 487–496 (TGAAHQEVEQ) the composition is skewed to basic and acidic residues. The interval 487–512 (TGAAHQEVEQPKAAAQPEAEQPKDEL) is disordered. The short motif at 509–512 (KDEL) is the Prevents secretion from ER element.

Belongs to the protein disulfide isomerase family.

It is found in the endoplasmic reticulum lumen. The enzyme catalyses Catalyzes the rearrangement of -S-S- bonds in proteins.. Functionally, participates in the folding of proteins containing disulfide bonds, may be involved in glycosylation, prolyl hydroxylation and triglyceride transfer. The protein is Protein disulfide-isomerase (PDI) of Medicago sativa (Alfalfa).